We begin with the raw amino-acid sequence, 223 residues long: Sigma non-opioid intracellular receptor 1 (223 aa).

The Lumenal segment spans residues 1–9; the sequence is MCWAVGRRW. The interval 2 to 8 is targeting to endoplasmic reticulum-associated lipid droplets; it reads CWAVGRR. The chain crosses the membrane as a helical span at residues 10–30; that stretch reads AWAALLLAVAAVLAQVVWLWL. At 31 to 223 the chain is on the cytoplasmic side; that stretch reads GTQSFVFQHE…LTTYLFGQDA (193 aa). An important for ligand-binding region spans residues 99-106; the sequence is SLSEYVLL. A C-terminal hydrophobic region region spans residues 177 to 223; it reads VIPSTLGFALADTVFSTQDFLTLFYTLRAYARGLRLELTTYLFGQDA.

It belongs to the ERG2 family. In terms of assembly, homotrimer. Forms a ternary complex with ANK2 and ITPR3. The complex is disrupted by agonists. Interacts with KCNA4. Interacts with KCNA2; cocaine consumption leads to increased interaction. Interacts with RNF112 in an oxidative stress-regulated manner.

Its subcellular location is the nucleus inner membrane. The protein resides in the nucleus outer membrane. It is found in the nucleus envelope. The protein localises to the cytoplasmic vesicle. It localises to the endoplasmic reticulum membrane. Its subcellular location is the membrane. The protein resides in the lipid droplet. It is found in the cell junction. The protein localises to the cell membrane. It localises to the cell projection. Its subcellular location is the growth cone. The protein resides in the postsynaptic density membrane. Functions in lipid transport from the endoplasmic reticulum and is involved in a wide array of cellular functions probably through regulation of the biogenesis of lipid microdomains at the plasma membrane. Involved in the regulation of different receptors it plays a role in BDNF signaling and EGF signaling. Also regulates ion channels like the potassium channel and could modulate neurotransmitter release. Plays a role in calcium signaling through modulation together with ANK2 of the ITP3R-dependent calcium efflux at the endoplasmic reticulum. Plays a role in several other cell functions including proliferation, survival and death. Originally identified for its ability to bind various psychoactive drugs it is involved in learning processes, memory and mood alteration. Necessary for proper mitochondrial axonal transport in motor neurons, in particular the retrograde movement of mitochondria. Plays a role in protecting cells against oxidative stress-induced cell death via its interaction with RNF112. This is Sigma non-opioid intracellular receptor 1 (SIGMAR1) from Bos taurus (Bovine).